The chain runs to 208 residues: V-type ATP synthase subunit E (208 aa).

The protein belongs to the V-ATPase E subunit family.

In terms of biological role, produces ATP from ADP in the presence of a proton gradient across the membrane. The polypeptide is V-type ATP synthase subunit E (atpE) (Chlamydia muridarum (strain MoPn / Nigg)).